The chain runs to 388 residues: MKWLLLLGLVALSECIMYKVPLIRKKSLRRTLSERGLLKDFLKKHNLNPARKYFPQWEAPTLVDEQPLENYLDMEYFGTIGIGTPAQDFTVVFDTGSSNLWVPSVYCSSLACTNHNRFNPEDSSTYQSTSETVSITYGTGSMTGILGYDTVQVGGISDTNQIFGLSETEPGSFLYYAPFDGILGLAYPSISSSGATPVFDNIWNQGLVSQDLFSVYLSADDKSGSVVIFGGIDSSYYTGSLNWVPVTVEGYWQITVDSITMNGETIACAEGCQAIVDTGTSLLTGPTSPIANIQSDIGASENSDGDMVVSCSAISSLPDIVFTINGVQYPVPPSAYILQSEGSCISGFQGMNVPTESGELWILGDVFIRQYFTVFDRANNQVGLAPVA.

The signal sequence occupies residues 1–15 (MKWLLLLGLVALSEC). A propeptide spans 16–62 (IMYKVPLIRKKSLRRTLSERGLLKDFLKKHNLNPARKYFPQWEAPTL) (activation peptide). The Peptidase A1 domain occupies 76 to 385 (YFGTIGIGTP…DRANNQVGLA (310 aa)). Residue aspartate 94 is part of the active site. Cysteine 107 and cysteine 112 form a disulfide bridge. Position 130 is a phosphoserine (serine 130). An intrachain disulfide couples cysteine 268 to cysteine 272. The active site involves aspartate 277. A disulfide bond links cysteine 311 and cysteine 344.

This sequence belongs to the peptidase A1 family.

Its subcellular location is the secreted. It catalyses the reaction Preferential cleavage: hydrophobic, preferably aromatic, residues in P1 and P1' positions. Cleaves 1-Phe-|-Val-2, 4-Gln-|-His-5, 13-Glu-|-Ala-14, 14-Ala-|-Leu-15, 15-Leu-|-Tyr-16, 16-Tyr-|-Leu-17, 23-Gly-|-Phe-24, 24-Phe-|-Phe-25 and 25-Phe-|-Tyr-26 bonds in the B chain of insulin.. In terms of biological role, shows particularly broad specificity; although bonds involving phenylalanine and leucine are preferred, many others are also cleaved to some extent. In Homo sapiens (Human), this protein is Pepsin A-5 (PGA5).